A 505-amino-acid chain; its full sequence is Glutamate--tRNA ligase (505 aa).

Positions 16 to 26 (PSPTGFPHVGT) match the 'HIGH' region motif. The 'KMSKS' region signature appears at 257 to 261 (KLSKR). Residue K260 coordinates ATP.

Belongs to the class-I aminoacyl-tRNA synthetase family. Glutamate--tRNA ligase type 1 subfamily. Monomer.

It is found in the cytoplasm. The catalysed reaction is tRNA(Glu) + L-glutamate + ATP = L-glutamyl-tRNA(Glu) + AMP + diphosphate. Functionally, catalyzes the attachment of glutamate to tRNA(Glu) in a two-step reaction: glutamate is first activated by ATP to form Glu-AMP and then transferred to the acceptor end of tRNA(Glu). The protein is Glutamate--tRNA ligase of Psychrobacter sp. (strain PRwf-1).